A 703-amino-acid polypeptide reads, in one-letter code: MNPVRKTFQYGNSTVTLETGRIARQATGAVLVTMDDTVVLVTAVAEKEAVPGRDFFPLSVHYQEKTYAAGRIPGGYFKREGRPSEKETLTSRLIDRPIRPLFPDGFMNEVQIICTVMSANKDVDPDIASIIGAAAALEISGVPFQGPLAAARVGYTDEDGYLLNPGFKAIENSKLDMVVAGTEDAVLMVESEAKELTEDQMLGAVLFAHQEMQVAVQAIKEFAQEAGKPKWDWQAPEVNAELLEALKAKFAGSIGEAYGIRVKADRYAKLGELRQQAEEELAGEEEGKFEAELVKKYFSKLEKACVRQNIIKGEPRIDGRDTKTVRDLKIEVGVLPNTHGSALFTRGETQALVTATLGTMRDVLMVDALEGEKKDSFMFHYNFPPYSVGEASRVGGVGRREIGHGRLARRGVQALMPNLEEFPYAVRCVSEITESNGSSSMASVCGSSLALMDAGIPVKAPVAGIAMGLVKEGDSFAVLTDILGDEDHLGDMDFKVAGTEKGVTALQMDIKINGITDEIMEIALEQALHARLHILGEMNKVISEPRDSVADNAPKMETIKIDPDKIRDVIGKGGATIRSICEDTGASIDIDDNGTVRIYAESKLAADEAIYRITEITAEAEVGKLYRGKVERIVEFGAFVNILPGKDGLVHISQIAQERVENVTDYLKEGQEVVVKVLDIDARGRIKLSMKEVTEDEKASMAG.

Mg(2+) contacts are provided by Asp-487 and Asp-493. A KH domain is found at 554–613 (PKMETIKIDPDKIRDVIGKGGATIRSICEDTGASIDIDDNGTVRIYAESKLAADEAIYRI). The S1 motif domain maps to 623–691 (GKLYRGKVER…ARGRIKLSMK (69 aa)).

This sequence belongs to the polyribonucleotide nucleotidyltransferase family. As to quaternary structure, component of the RNA degradosome, which is a multiprotein complex involved in RNA processing and mRNA degradation. Requires Mg(2+) as cofactor.

The protein localises to the cytoplasm. It catalyses the reaction RNA(n+1) + phosphate = RNA(n) + a ribonucleoside 5'-diphosphate. Functionally, involved in mRNA degradation. Catalyzes the phosphorolysis of single-stranded polyribonucleotides processively in the 3'- to 5'-direction. The polypeptide is Polyribonucleotide nucleotidyltransferase (Hahella chejuensis (strain KCTC 2396)).